A 786-amino-acid polypeptide reads, in one-letter code: Leucine-rich repeat extensin-like protein 2 (786 aa).

Residues 1–28 form the signal peptide; that stretch reads MLLFPSTSLRLFFFLFLLFSSCFLQIRG. N73 and N79 each carry an N-linked (GlcNAc...) asparagine glycan. 9 LRR repeats span residues 100 to 124, 125 to 147, 149 to 172, 173 to 196, 198 to 219, 221 to 243, 244 to 267, 268 to 291, and 292 to 315; these read TRVV…LGLL, TDLA…TFKH, KLLF…VLSL, PSLK…LFDK, LDAI…MGNS, VSAL…GLMG, KTLN…IGNL, KNVT…IGNM, and KSLE…ICQL. N255 and N269 each carry an N-linked (GlcNAc...) asparagine glycan. N-linked (GlcNAc...) asparagine glycosylation is found at N320 and N346. Disordered regions lie at residues 352–372, 390–589, 624–645, and 694–786; these read IDGK…SRSV, FKMS…YYAV, PPVY…YYPP, and PPPS…IPYY. Positions 353-362 are enriched in basic and acidic residues; the sequence is DGKEDQRSSK. The contains the Ser-Pro(4) repeats stretch occupies residues 384–786; it reads SPPPPSFKMS…SPPPPSIPYY (403 aa). 3 stretches are compositionally biased toward pro residues: residues 460-477, 487-542, and 566-589; these read YPPP…PPPS, YPPP…PPPK, and SPPP…YYAV. Composition is skewed to pro residues over residues 694 to 713, 720 to 737, 752 to 769, and 777 to 786; these read PPPS…PPST, PASP…PPPK, PTPP…PLPP, and SPPPPSIPYY.

Post-translationally, hydroxylated on proline residues in the S-P-P-P-P repeat. In terms of processing, O-glycosylated on hydroxyprolines. As to expression, mostly expressed in roots, also present in stems at low levels. In roots, confined to differentiation zones, the collet, and meristematic cells of tips.

It localises to the secreted. It is found in the cell wall. Functionally, modulates cell morphogenesis by regulating cell wall formation and assembly, and/or growth polarization. Together with LRX2, component of the extracellular mechanism regulating root hair morphogenesis and elongation. In Arabidopsis thaliana (Mouse-ear cress), this protein is Leucine-rich repeat extensin-like protein 2 (LRX2).